The sequence spans 380 residues: Cytochrome b (380 aa).

4 helical membrane passes run 34-54, 78-99, 114-134, and 179-199; these read FGSLLGICLMTQILTGLLLAM, WLIRNLHANGASLFFICIYLHI, WNTGIILLLTLMATAFVGYVL, and FFALHFLLPFLIAGLTLIHLT. Residues His84 and His98 each coordinate heme b. The heme b site is built by His183 and His197. His202 lines the a ubiquinone pocket. Helical transmembrane passes span 227-247, 289-309, 321-341, and 348-368; these read SKDILGFMLLYFLLTTLALLS, LGGVLALAASILILFLSPFLH, LSQALFWLLVTNLFILTWIGS, and FIIIGQLASLSYFTILLILLP.

It belongs to the cytochrome b family. The cytochrome bc1 complex contains 11 subunits: 3 respiratory subunits (MT-CYB, CYC1 and UQCRFS1), 2 core proteins (UQCRC1 and UQCRC2) and 6 low-molecular weight proteins (UQCRH/QCR6, UQCRB/QCR7, UQCRQ/QCR8, UQCR10/QCR9, UQCR11/QCR10 and a cleavage product of UQCRFS1). This cytochrome bc1 complex then forms a dimer. The cofactor is heme b.

The protein localises to the mitochondrion inner membrane. Component of the ubiquinol-cytochrome c reductase complex (complex III or cytochrome b-c1 complex) that is part of the mitochondrial respiratory chain. The b-c1 complex mediates electron transfer from ubiquinol to cytochrome c. Contributes to the generation of a proton gradient across the mitochondrial membrane that is then used for ATP synthesis. In Phalcoboenus australis (Striated caracara), this protein is Cytochrome b (MT-CYB).